The primary structure comprises 135 residues: Ribosome-binding factor A (135 aa).

Belongs to the RbfA family. In terms of assembly, monomer. Binds 30S ribosomal subunits, but not 50S ribosomal subunits or 70S ribosomes.

It is found in the cytoplasm. Functionally, one of several proteins that assist in the late maturation steps of the functional core of the 30S ribosomal subunit. Associates with free 30S ribosomal subunits (but not with 30S subunits that are part of 70S ribosomes or polysomes). Required for efficient processing of 16S rRNA. May interact with the 5'-terminal helix region of 16S rRNA. This is Ribosome-binding factor A from Aliivibrio fischeri (strain ATCC 700601 / ES114) (Vibrio fischeri).